Reading from the N-terminus, the 349-residue chain is Hydroxymethylglutaryl-CoA synthase (349 aa).

Asp-30 and Ala-31 together coordinate (3S)-3-hydroxy-3-methylglutaryl-CoA. Glu-82 functions as the Proton donor/acceptor in the catalytic mechanism. (3S)-3-hydroxy-3-methylglutaryl-CoA is bound by residues Cys-114 and Thr-155. Cys-114 (acyl-thioester intermediate) is an active-site residue. Residue Arg-203 coordinates CoA. (3S)-3-hydroxy-3-methylglutaryl-CoA contacts are provided by Thr-205 and His-238. The active-site Proton donor/acceptor is the His-238. Lys-243 lines the CoA pocket. Residues Asn-270 and Ser-300 each contribute to the (3S)-3-hydroxy-3-methylglutaryl-CoA site.

The protein belongs to the thiolase-like superfamily. Archaeal HMG-CoA synthase family. In terms of assembly, interacts with acetoacetyl-CoA thiolase that catalyzes the precedent step in the pathway and with a DUF35 protein. The acetoacetyl-CoA thiolase/HMG-CoA synthase complex channels the intermediate via a fused CoA-binding site, which allows for efficient coupling of the endergonic thiolase reaction with the exergonic HMGCS reaction.

The enzyme catalyses acetoacetyl-CoA + acetyl-CoA + H2O = (3S)-3-hydroxy-3-methylglutaryl-CoA + CoA + H(+). It participates in metabolic intermediate biosynthesis; (R)-mevalonate biosynthesis; (R)-mevalonate from acetyl-CoA: step 2/3. Functionally, catalyzes the condensation of acetyl-CoA with acetoacetyl-CoA to form 3-hydroxy-3-methylglutaryl-CoA (HMG-CoA). Functions in the mevalonate (MVA) pathway leading to isopentenyl diphosphate (IPP), a key precursor for the biosynthesis of isoprenoid compounds that are building blocks of archaeal membrane lipids. The protein is Hydroxymethylglutaryl-CoA synthase of Methanococcus maripaludis (strain C5 / ATCC BAA-1333).